Consider the following 180-residue polypeptide: MQITVSGLPGSGTSTLSKLLAECYDLELISSGEIFRRMARERGMSLAEFGALAERDPSIDLDIDKNQKAIIHSRENIILESRLAGHMAQGRSDVIKIWIKAPLLTRVKRIQRREKTISFDEELKKTVERERSETLRYKNYYGIDITDLSIYDIVIDSEKWNQYQTLDILRVAIDALVGPE.

Gly-7–Thr-15 provides a ligand contact to ATP.

This sequence belongs to the cytidylate kinase family. Type 2 subfamily.

It localises to the cytoplasm. It catalyses the reaction CMP + ATP = CDP + ADP. The catalysed reaction is dCMP + ATP = dCDP + ADP. This chain is Cytidylate kinase (cmk), found in Methanosarcina mazei (strain ATCC BAA-159 / DSM 3647 / Goe1 / Go1 / JCM 11833 / OCM 88) (Methanosarcina frisia).